A 236-amino-acid chain; its full sequence is Virion protein US10 homolog (236 aa).

Positions methionine 1–aspartate 32 are disordered. Positions serine 21 to alanine 31 are enriched in gly residues. Residues cysteine 138–cysteine 150 fold into a zinc finger.

Belongs to the herpesviridae US10 family. Phosphorylated.

It is found in the virion tegument. Its subcellular location is the host nucleus matrix. The protein is Virion protein US10 homolog (IR5) of Equine herpesvirus 1 (strain Kentucky A) (EHV-1).